The following is a 256-amino-acid chain: Ras-related protein Rab-26 (256 aa).

A disordered region spans residues 1–51 (MSRKKTPKSKGASTPAASTLPTANGARPARSGTALSGPDAPPNGPLQPGRP). Low complexity predominate over residues 12 to 23 (ASTPAASTLPTA). Positions 72, 73, 74, 75, 76, 77, 78, 95, and 96 each coordinate GTP. A Mg(2+)-binding site is contributed by T77. 2 short sequence motifs (switch) span residues 86 to 101 (GAFL…GIDF) and 119 to 136 (DTAG…YYRD). Residues T96 and D119 each coordinate Mg(2+). 6 residues coordinate GTP: G122, N177, K178, D180, A208, and K209. S-geranylgeranyl cysteine attachment occurs at residues C253 and C254.

This sequence belongs to the small GTPase superfamily. Rab family. As to quaternary structure, interacts with RIMS1. Interacts with ADRA2B. Mg(2+) is required as a cofactor. Predominantly expressed in brain.

Its subcellular location is the golgi apparatus membrane. The protein resides in the cytoplasmic vesicle. The protein localises to the secretory vesicle membrane. It catalyses the reaction GTP + H2O = GDP + phosphate + H(+). With respect to regulation, regulated by guanine nucleotide exchange factors (GEFs) which promote the exchange of bound GDP for free GTP. Regulated by GTPase activating proteins (GAPs) which increase the GTP hydrolysis activity. Inhibited by GDP dissociation inhibitors (GDIs). The small GTPases Rab are key regulators of intracellular membrane trafficking, from the formation of transport vesicles to their fusion with membranes. Rabs cycle between an inactive GDP-bound form and an active GTP-bound form that is able to recruit to membranes different set of downstream effectors directly responsible for vesicle formation, movement, tethering and fusion. RAB26 mediates transport of ADRA2A and ADRA2B from the Golgi to the cell membrane. Plays a role in the maturation of zymogenic granules and in pepsinogen secretion in the stomach. Plays a role in the secretion of amylase from acinar granules in the parotid gland. The sequence is that of Ras-related protein Rab-26 from Homo sapiens (Human).